Here is a 42-residue protein sequence, read N- to C-terminus: Crotamine-IV-2 (42 aa).

3 disulfide bridges follow: Cys-4/Cys-37, Cys-11/Cys-31, and Cys-19/Cys-38.

The protein belongs to the crotamine-myotoxin family. In terms of assembly, monomer. In terms of tissue distribution, expressed by the venom gland.

It is found in the secreted. Cationic peptide that possesses multiple functions. It acts as a cell-penetrating peptide (CPP), and as a potent voltage-gated potassium channel (Kv) inhibitor. It exhibits antimicrobial activities, and hind limb paralysis. It also induces potent blockade of neuromuscular transmission in young chicken biventer cervicis preparation and potent myotoxic effect. In vivo, induces myonecrosis, upon intramuscular or subcutaneous injections into mice. This is Crotamine-IV-2 from Crotalus durissus cumanensis (South American rattlesnake).